We begin with the raw amino-acid sequence, 138 residues long: Small ribosomal subunit protein uS12 (138 aa).

The disordered stretch occupies residues 1–20 (MPTISQLINHGRSAKTSKSK). A 3-methylthioaspartic acid modification is found at aspartate 102. Positions 116 to 138 (DAAGVDKRKQGRSIYGTKKPKEN) are disordered.

This sequence belongs to the universal ribosomal protein uS12 family. In terms of assembly, part of the 30S ribosomal subunit. Contacts proteins S8 and S17. May interact with IF1 in the 30S initiation complex.

With S4 and S5 plays an important role in translational accuracy. Its function is as follows. Interacts with and stabilizes bases of the 16S rRNA that are involved in tRNA selection in the A site and with the mRNA backbone. Located at the interface of the 30S and 50S subunits, it traverses the body of the 30S subunit contacting proteins on the other side and probably holding the rRNA structure together. The combined cluster of proteins S8, S12 and S17 appears to hold together the shoulder and platform of the 30S subunit. The protein is Small ribosomal subunit protein uS12 of Metamycoplasma arthritidis (strain 158L3-1) (Mycoplasma arthritidis).